The following is a 237-amino-acid chain: Endoglucanase-1 (237 aa).

The N-terminal stretch at 1–16 is a signal peptide; sequence MKAFHLLAALAGAAVA. At Gln-17 the chain carries Pyrrolidone carboxylic acid.

It belongs to the glycosyl hydrolase 12 (cellulase H) family.

It localises to the secreted. It carries out the reaction Endohydrolysis of (1-&gt;4)-beta-D-glucosidic linkages in cellulose, lichenin and cereal beta-D-glucans.. The protein is Endoglucanase-1 of Aspergillus aculeatus.